The sequence spans 1840 residues: Sodium channel protein type 4 subunit alpha (1840 aa).

The Cytoplasmic portion of the chain corresponds to 1-131; the sequence is MASSSLPNLV…RVAIKVLIHA (131 aa). Positions 36 to 60 are enriched in basic and acidic residues; the sequence is EARLQRNKQMEIEEPERKPRSDLEA. Residues 36-63 are disordered; it reads EARLQRNKQMEIEEPERKPRSDLEAGKN. An I repeat occupies 113 to 448; that stretch reads LLSPFSIVRR…VVAMAYAEQN (336 aa). The helical transmembrane segment at 132–150 threads the bilayer; sequence LFSMFIMITILTNCVFMTM. Residues 151-157 are Extracellular-facing; the sequence is SNPPSWS. The helical transmembrane segment at 158-178 threads the bilayer; that stretch reads KHVEYTFTGIYTFESLIKMLA. Residues 179 to 192 are Cytoplasmic-facing; it reads RGFCIDDFTFLRDP. The helical transmembrane segment at 193 to 210 threads the bilayer; the sequence is WNWLDFSVITMAYVTEFV. The Extracellular segment spans residues 211 to 216; sequence DLGNIS. A helical transmembrane segment spans residues 217–233; that stretch reads ALRTFRVLRALKTITVI. Residues 234 to 252 are Cytoplasmic-facing; it reads PGLKTIVGALIQSVKKLSD. Residues 253–272 traverse the membrane as a helical segment; that stretch reads VMILTVFCLSVFALVGLQLF. Residues 273–385 lie on the Extracellular side of the membrane; sequence MGNLRQKCVR…PNYGYTSYDT (113 aa). A disulfide bridge connects residues Cys-280 and Cys-354. Asn-288, Asn-291, Asn-297, Asn-303, Asn-309, Asn-315, Asn-327, and Asn-356 each carry an N-linked (GlcNAc...) asparagine glycan. The cysteines at positions 363 and 369 are disulfide-linked. Positions 386 to 410 form an intramembrane region, pore-forming; sequence FSWAFLALFRLMTQDYWENLFQLTL. At 411-417 the chain is on the extracellular side; sequence RAAGKTY. A helical membrane pass occupies residues 418 to 438; sequence MIFFVVIIFLGSFYLINLILA. Residues 439–572 lie on the Cytoplasmic side of the membrane; that stretch reads VVAMAYAEQN…HIIYLIVMDP (134 aa). The segment at 481–522 is disordered; the sequence is AAQALESGEEADGDPTHNKDCNGSLDASGEKGPPRPSCSADS. Ser-487 is modified (phosphoserine). An II repeat occupies 554–826; sequence CCAPWVKFKH…QIAIGRIKWG (273 aa). The helical transmembrane segment at 573–591 threads the bilayer; it reads FVDLGITICIVLNTLFMAM. Residues 592-602 are Extracellular-facing; the sequence is EHYPMTEHFDN. A helical transmembrane segment spans residues 603-622; that stretch reads VLSVGNLVFTGIFTAEMVLK. Topologically, residues 623–636 are cytoplasmic; sequence LIAMDPYEYFQQGW. The chain crosses the membrane as a helical span at residues 637-656; sequence NIFDSFIVTLSLVELGLANV. Over 657–658 the chain is Extracellular; sequence QG. The chain crosses the membrane as a helical span at residues 659–676; sequence LSVLRSFRLLRVFKLAKS. The Cytoplasmic segment spans residues 677–692; that stretch reads WPTLNMLIKIIGNSVG. The chain crosses the membrane as a helical span at residues 693–711; sequence ALGNLTLVLAIIVFIFAVV. Topologically, residues 712-740 are extracellular; the sequence is GMQLFGKSYKECVCKIASDCNLPRWHMND. Cys-725 and Cys-731 are disulfide-bonded. Residues 741 to 761 constitute an intramembrane region (pore-forming); the sequence is FFHSFLIVFRILCGEWIETMW. The Extracellular segment spans residues 762 to 772; the sequence is DCMEVAGQAMC. A disulfide bond links Cys-763 and Cys-772. Residues 773–791 traverse the membrane as a helical segment; the sequence is LTVFLMVMVIGNLVVLNLF. Topologically, residues 792–1025 are cytoplasmic; the sequence is LALLLSSFSA…ACFKIVEHNW (234 aa). Disordered stretches follow at residues 854–884 and 925–983; these read EPGG…LKDN and DLEM…GEQP. Residues 868-884 are compositionally biased toward basic and acidic residues; the sequence is EDEKKEPPPEDKELKDN. Composition is skewed to acidic residues over residues 925 to 940 and 968 to 983; these read DLEM…FSEP and EDPE…GEQP. Residues 1006 to 1319 form an III repeat; sequence RGKMWWTLRR…KKYYNAMKKL (314 aa). Residues 1026–1043 form a helical membrane-spanning segment; that stretch reads FETFIVFMILLSSGALAF. At 1044-1056 the chain is on the extracellular side; it reads EDIYIEQRRVIRT. Residues 1057–1075 form a helical membrane-spanning segment; sequence ILEYADKVFTYIFILEMLL. Over 1076-1089 the chain is Cytoplasmic; it reads KWVAYGFKVYFTNA. Residues 1090–1108 form a helical membrane-spanning segment; it reads WCWLDFLIVDVSIISLVAN. At 1109–1116 the chain is on the extracellular side; it reads WLGYSELG. Residues 1117-1135 traverse the membrane as a helical segment; sequence PIKSLRTLRALRPLRALSR. Residues 1136 to 1152 lie on the Cytoplasmic side of the membrane; sequence FEGMRVVVNALLGAIPS. A helical membrane pass occupies residues 1153–1172; sequence IMNVLLVCLIFWLIFSIMGV. At 1173–1223 the chain is on the extracellular side; that stretch reads NLFAGKFYYCVNTTTSERFDISVVNNKSESESLMYTGQVRWMNVKVNYDNV. Asn-1198 is a glycosylation site (N-linked (GlcNAc...) asparagine). Residues 1224 to 1245 constitute an intramembrane region (pore-forming); the sequence is GLGYLSLLQVATFKGWMDIMYA. Topologically, residues 1246–1262 are extracellular; sequence AVDSREKEEQPHYEVNL. A helical transmembrane segment spans residues 1263–1284; it reads YMYLYFVIFIIFGSFFTLNLFI. Over 1285–1347 the chain is Cytoplasmic; that stretch reads GVIIDNFNQQ…MVYDFVTKQV (63 aa). Residues 1303–1305 form an important for rapid channel inactivation region; the sequence is IFM. The IV repeat unit spans residues 1328–1626; it reads IPRPQNKIQG…WEKFDPDATQ (299 aa). A helical membrane pass occupies residues 1348–1365; that stretch reads FDISIMILICLNMVTMMV. Residues 1366-1376 lie on the Extracellular side of the membrane; the sequence is ETDDQSQLKVD. A helical transmembrane segment spans residues 1377–1395; that stretch reads ILYNINMVFIIIFTGECVL. Residues 1396–1407 are Cytoplasmic-facing; the sequence is KMFALRHYYFTI. Residues 1408-1425 traverse the membrane as a helical segment; that stretch reads GWNIFDFVVVILSIVGLA. Over 1426 to 1438 the chain is Extracellular; the sequence is LSDLIQKYFVSPT. The chain crosses the membrane as a helical span at residues 1439–1455; that stretch reads LFRVIRLARIGRVLRLI. Topologically, residues 1456 to 1474 are cytoplasmic; it reads RGAKGIRTLLFALMMSLPA. A helical transmembrane segment spans residues 1475 to 1492; the sequence is LFNIGLLLFLVMFIYSIF. Topologically, residues 1493–1514 are extracellular; sequence GMSNFAYVKKESGIDDMFNFET. The segment at residues 1515 to 1537 is an intramembrane region (pore-forming); sequence FGNSIICLFEITTSAGWDGLLNP. At 1538-1567 the chain is on the extracellular side; it reads ILNSGPPDCDPTLENPGTNVRGDCGNPSIG. A disulfide bond links Cys-1546 and Cys-1561. The chain crosses the membrane as a helical span at residues 1568-1590; the sequence is ICFFCSYIIISFLIVVNMYIAII. The Cytoplasmic segment spans residues 1591-1840; it reads LENFNVATEE…VRPGVKESLV (250 aa). One can recognise an IQ domain in the interval 1720-1749; sequence EEVCAIKIQRAYRRHLLQRSVKQASYMYRH. Residues 1775–1840 are disordered; that stretch reads HEKEGDGVQS…VRPGVKESLV (66 aa). The span at 1804–1813 shows a compositional bias: low complexity; sequence PTSSSDTALT. Pro residues predominate over residues 1814–1824; it reads PSPPPLPPSSS.

It belongs to the sodium channel (TC 1.A.1.10) family. Nav1.4/SCN4A subfamily. In terms of assembly, the Nav1.4 voltage-gated sodium channel consists of an ion-conducting alpha subunit SCN4A which is functional on its own and a regulatory beta subunit SCN1B. SCN1B strongly enhances the presence of SCN4A at the cell surface. SCN1B is also required for rapid channel inactivation and recovery after inactivation. It prevents the decrease of channel activity in response to repetitive, high-frequency depolarizations. Interacts with the syntrophins SNTA1, SNTB1 and SNTB2 (via PDZ domain); probably links SCN4A to the actin cytoskeleton and the extracellular matrix via the dystrophin-associated protein complex and regulates its localization in muscle cells. Interacts with TMEM233; probable regulator of the channel. As to expression, detected in skeletal muscle.

The protein localises to the cell membrane. It catalyses the reaction Na(+)(in) = Na(+)(out). Its activity is regulated as follows. Potently inhibited by tetrodotoxin and saxitoxin. Inhibited by the conotoxin GVIIJ. In terms of biological role, pore-forming subunit of Nav1.4, a voltage-gated sodium (Nav) channel that directly mediates the depolarizing phase of action potentials in excitable membranes. Navs, also called VGSCs (voltage-gated sodium channels) or VDSCs (voltage-dependent sodium channels), operate by switching between closed and open conformations depending on the voltage difference across the membrane. In the open conformation they allow Na(+) ions to selectively pass through the pore, along their electrochemical gradient. The influx of Na+ ions provokes membrane depolarization, initiating the propagation of electrical signals throughout cells and tissues. Highly expressed in skeletal muscles, Nav1.4 generates the action potential crucial for muscle contraction. This is Sodium channel protein type 4 subunit alpha from Rattus norvegicus (Rat).